A 170-amino-acid polypeptide reads, in one-letter code: uncharacterized protein (170 aa).

The N-acetyltransferase domain occupies 8–167; sequence LLIREFEFKD…DEYYYAILEE (160 aa).

This sequence belongs to the acetyltransferase family.

This is an uncharacterized protein from Bacillus subtilis (strain 168).